The chain runs to 157 residues: 6,7-dimethyl-8-ribityllumazine synthase 2 (157 aa).

Residues tryptophan 21, 55–57, and 79–81 each bind 5-amino-6-(D-ribitylamino)uracil; these read AYE and FVV. Arginine 87 acts as the Proton donor in catalysis. Serine 112 serves as a coordination point for 5-amino-6-(D-ribitylamino)uracil. Histidine 126 provides a ligand contact to (2S)-2-hydroxy-3-oxobutyl phosphate.

It belongs to the DMRL synthase family. In terms of assembly, homodecamer, arranged as a dimer of pentamers.

The catalysed reaction is (2S)-2-hydroxy-3-oxobutyl phosphate + 5-amino-6-(D-ribitylamino)uracil = 6,7-dimethyl-8-(1-D-ribityl)lumazine + phosphate + 2 H2O + H(+). The protein operates within cofactor biosynthesis; riboflavin biosynthesis; riboflavin from 2-hydroxy-3-oxobutyl phosphate and 5-amino-6-(D-ribitylamino)uracil: step 1/2. Its function is as follows. Catalyzes the formation of 6,7-dimethyl-8-ribityllumazine by condensation of 5-amino-6-(D-ribitylamino)uracil with 3,4-dihydroxy-2-butanone 4-phosphate. This is the penultimate step in the biosynthesis of riboflavin. The protein is 6,7-dimethyl-8-ribityllumazine synthase 2 (ribH2) of Mesorhizobium japonicum (strain LMG 29417 / CECT 9101 / MAFF 303099) (Mesorhizobium loti (strain MAFF 303099)).